Reading from the N-terminus, the 188-residue chain is Oleosin S2-2 (188 aa).

N-acetylalanine is present on alanine 2. Positions 2 to 51 (ATVERRVQVDPTDKRIHLQPQYEGDVGYGYGYGGRADYKSSGPSSNQIVA) are polar. Transmembrane regions (helical) follow at residues 49–69 (IVAL…AGLT), 74–94 (VIGL…IVPA), and 96–116 (ITIG…LTGL). The segment at 52–125 (LIVGVPVGGS…LSSVSWVLNY (74 aa)) is hydrophobic. The interval 164–188 (DKAHEAHDTSLTTETTEPGKTRRHT) is disordered. A compositionally biased stretch (polar residues) spans 172–181 (TSLTTETTEP).

Belongs to the oleosin family.

Its subcellular location is the lipid droplet. The protein localises to the membrane. May have a structural role to stabilize the lipid body during desiccation of the seed by preventing coalescence of the oil. Probably interacts with both lipid and phospholipid moieties of lipid bodies. May also provide recognition signals for specific lipase anchorage in lipolysis during seedling growth. This Brassica napus (Rape) protein is Oleosin S2-2 (S2).